The chain runs to 388 residues: Adenosine deaminase-like protein (388 aa).

Residues 1–13 (MPNNSKHKKKQQR) show a composition bias toward basic residues. Residues 1-34 (MPNNSKHKKKQQRRQQEAQKKSRAKQIETDKKND) are disordered. Residues 14-34 (RQQEAQKKSRAKQIETDKKND) are compositionally biased toward basic and acidic residues. Zn(2+) contacts are provided by histidine 65 and histidine 67. N(6)-methyl-AMP-binding positions include histidine 67, histidine 114, 146-149 (TSPK), aspartate 186, and glycine 218. Histidine 245 contributes to the Zn(2+) binding site. The N(6)-methyl-AMP site is built by glutamate 248, aspartate 326, and aspartate 327. The active-site Proton donor is glutamate 248. Aspartate 326 serves as a coordination point for Zn(2+).

This sequence belongs to the metallo-dependent hydrolases superfamily. Adenosine and AMP deaminases family. In terms of assembly, monomer. Zn(2+) serves as cofactor.

The catalysed reaction is N(6)-methyl-AMP + H2O + H(+) = IMP + methylamine. In terms of biological role, catalyzes the hydrolysis of the free cytosolic methylated adenosine nucleotide N(6)-methyl-AMP (N6-mAMP) to produce inositol monophosphate (IMP) and methylamine. Is required for the catabolism of cytosolic N6-mAMP, which is derived from the degradation of mRNA containing N6-methylated adenine (m6A). This is Adenosine deaminase-like protein from Caenorhabditis elegans.